The primary structure comprises 125 residues: Small ribosomal subunit protein uS12m (125 aa).

The tract at residues 1-51 (MPTKNQLIRHGREEKRRTDRTRALDQCPQKQGVCPRVSTRTPKKPNSAPRK) is disordered. A compositionally biased stretch (basic and acidic residues) spans 10–23 (HGREEKRRTDRTRA).

This sequence belongs to the universal ribosomal protein uS12 family.

The protein localises to the mitochondrion. In terms of biological role, protein S12 is involved in the translation initiation step. This Nicotiana sylvestris (Wood tobacco) protein is Small ribosomal subunit protein uS12m (RPS12).